A 57-amino-acid chain; its full sequence is UPF0391 membrane protein BRADO5617 (57 aa).

2 helical membrane passes run methionine 1 to glycine 21 and isoleucine 30 to leucine 50.

This sequence belongs to the UPF0391 family.

It is found in the cell membrane. The sequence is that of UPF0391 membrane protein BRADO5617 from Bradyrhizobium sp. (strain ORS 278).